The chain runs to 304 residues: Glutaminase (304 aa).

Substrate contacts are provided by Ser63, Asn114, Glu158, Asn165, Tyr189, Tyr240, and Val258.

The protein belongs to the glutaminase family. As to quaternary structure, homotetramer.

It carries out the reaction L-glutamine + H2O = L-glutamate + NH4(+). This is Glutaminase from Shewanella amazonensis (strain ATCC BAA-1098 / SB2B).